A 228-amino-acid chain; its full sequence is Cytochrome c oxidase subunit 2 (228 aa).

Over 1–26 (MSQWFQLGLQNGNSPLMEQLIFFHDH) the chain is Mitochondrial intermembrane. The chain crosses the membrane as a helical span at residues 27–48 (ALLVVILITSLVGFFLAALFSN). The Mitochondrial matrix portion of the chain corresponds to 49-62 (KFLHRYLLDGQAIE). A helical transmembrane segment spans residues 63-82 (TVWTVIPAIILVAIALPSIR). Residues 83 to 228 (LLYLIDEIHN…FLKWLELQIS (146 aa)) are Mitochondrial intermembrane-facing. Cu cation-binding residues include His161, Cys196, Glu198, Cys200, His204, and Met207. Glu198 serves as a coordination point for Mg(2+).

The protein belongs to the cytochrome c oxidase subunit 2 family. Component of the cytochrome c oxidase (complex IV, CIV), a multisubunit enzyme composed of a catalytic core of 3 subunits and several supernumerary subunits. The complex exists as a monomer or a dimer and forms supercomplexes (SCs) in the inner mitochondrial membrane with ubiquinol-cytochrome c oxidoreductase (cytochrome b-c1 complex, complex III, CIII). The cofactor is Cu cation.

The protein resides in the mitochondrion inner membrane. It carries out the reaction 4 Fe(II)-[cytochrome c] + O2 + 8 H(+)(in) = 4 Fe(III)-[cytochrome c] + 2 H2O + 4 H(+)(out). Functionally, component of the cytochrome c oxidase, the last enzyme in the mitochondrial electron transport chain which drives oxidative phosphorylation. The respiratory chain contains 3 multisubunit complexes succinate dehydrogenase (complex II, CII), ubiquinol-cytochrome c oxidoreductase (cytochrome b-c1 complex, complex III, CIII) and cytochrome c oxidase (complex IV, CIV), that cooperate to transfer electrons derived from NADH and succinate to molecular oxygen, creating an electrochemical gradient over the inner membrane that drives transmembrane transport and the ATP synthase. Cytochrome c oxidase is the component of the respiratory chain that catalyzes the reduction of oxygen to water. Electrons originating from reduced cytochrome c in the intermembrane space (IMS) are transferred via the dinuclear copper A center (CU(A)) of subunit 2 and heme A of subunit 1 to the active site in subunit 1, a binuclear center (BNC) formed by heme A3 and copper B (CU(B)). The BNC reduces molecular oxygen to 2 water molecules using 4 electrons from cytochrome c in the IMS and 4 protons from the mitochondrial matrix. The sequence is that of Cytochrome c oxidase subunit 2 (COII) from Artemia franciscana (Brine shrimp).